The sequence spans 133 residues: Putative HTH-type transcriptional regulator YwnA (133 aa).

The HTH rrf2-type domain maps to methionine 1–asparagine 130. The segment at residues serine 24–lysine 47 is a DNA-binding region (H-T-H motif).

This Bacillus subtilis (strain 168) protein is Putative HTH-type transcriptional regulator YwnA (ywnA).